The primary structure comprises 113 residues: uncharacterized protein (113 aa).

This is an uncharacterized protein from Ureaplasma parvum serovar 3 (strain ATCC 700970).